The sequence spans 311 residues: MHQKLLKSAHYIELGSYQYWPVLVPRGIRLYTYEQIPGSLKDNPYITDGYRAYLPSRLCIKSLFILSNETVNIWSHLLGFFLFFTLGIYDMTSVLPSASASREDFVICSICLFCFQVCMLCSVGYHLFSCHRSEKTCRRWMALDYAGISIGILGCYVSGVFYAFYCNNYWRQVYLITVLAMILAVFFAQIHPNYLTQQWQRLRSIIFCSVSGYGVIPTLHWVWLNGGIGAPIVQDFAPRVIVMYMIALLAFLFYISKVPERYFPGQLNYLGSSHQIWHILAVVMLYWWHQSTVYVMQYRHSKPCPDYVSHL.

Residues 1–20 (MHQKLLKSAHYIELGSYQYW) form a required for interaction with SREBF2 region. The Cytoplasmic segment spans residues 1-73 (MHQKLLKSAH…FILSNETVNI (73 aa)). A required for interaction with SCAP region spans residues 41–60 (KDNPYITDGYRAYLPSRLCI). The interval 61–71 (KSLFILSNETV) is golgi targeting. A helical transmembrane segment spans residues 74-96 (WSHLLGFFLFFTLGIYDMTSVLP). Residues 97-105 (SASASREDF) are Lumenal-facing. Residues 106 to 128 (VICSICLFCFQVCMLCSVGYHLF) form a helical membrane-spanning segment. Over 129–140 (SCHRSEKTCRRW) the chain is Cytoplasmic. The chain crosses the membrane as a helical span at residues 141–163 (MALDYAGISIGILGCYVSGVFYA). Over 164-172 (FYCNNYWRQ) the chain is Lumenal. A helical transmembrane segment spans residues 173–195 (VYLITVLAMILAVFFAQIHPNYL). At 196–201 (TQQWQR) the chain is on the cytoplasmic side. A helical transmembrane segment spans residues 202–224 (LRSIIFCSVSGYGVIPTLHWVWL). Residues 225–238 (NGGIGAPIVQDFAP) lie on the Lumenal side of the membrane. A helical transmembrane segment spans residues 239–256 (RVIVMYMIALLAFLFYIS). Over 257-275 (KVPERYFPGQLNYLGSSHQ) the chain is Cytoplasmic. The helical transmembrane segment at 276–298 (IWHILAVVMLYWWHQSTVYVMQY) threads the bilayer. The interval 299–303 (RHSKP) is golgi targeting. Residues 299–311 (RHSKPCPDYVSHL) lie on the Lumenal side of the membrane.

It belongs to the ADIPOR family. As to quaternary structure, interacts with SCAP and SREBF2; the interactions are direct, increase in low cholesterol conditions and tether SCAP:SREBP complex to the Golgi apparatus. Interaction with SCAP is mutually exclusive with INSIG1. In hepatocytes, interacts with PPARA and HUWE1; the interactions promote PPARA poylubiquitination and HUWE1-mediated degradation. In macrophages, interacts with PPARG and STUB1; the interactions promote PPARG poylubiquitination and STUB1-mediated degradation. Widely expressed in a range of tissues.

It is found in the golgi apparatus membrane. Functionally, golgi-scaffold protein which modulates its interactors acitivies by anchoring them to the Golgi apparatus. Functions as a spatial regulator of RAF1 kinase by sequestrating it to the Golgi apparatus. Acts as a positive regulator of cholesterol biosynthesis by mediating the anchoring of the SCAP:SREBP complex in the Golgi apparatus, thereby promoting SCAP:SREBF2 complex formation, potentiating SREBF2 and SREBF1 processing and enhancing lipid synthesis. Also regulates PPARA and PPARG functions by mediating their interaction with E3 ubiquitin ligases, such as STUB1 or HUWE1, leading to their polyubiquitination and proteasome-mediated degradation. This chain is Progestin and adipoQ receptor family member 3, found in Homo sapiens (Human).